A 136-amino-acid chain; its full sequence is Large ribosomal subunit protein uL16 (136 aa).

The protein belongs to the universal ribosomal protein uL16 family. Part of the 50S ribosomal subunit.

Its function is as follows. Binds 23S rRNA and is also seen to make contacts with the A and possibly P site tRNAs. The sequence is that of Large ribosomal subunit protein uL16 from Mannheimia succiniciproducens (strain KCTC 0769BP / MBEL55E).